Here is a 1671-residue protein sequence, read N- to C-terminus: AF4/FMR2 family member lilli (1671 aa).

6 disordered regions span residues 53–79 (YSQN…QQGI), 126–304 (SAPG…EKDV), 393–599 (LAGE…SNKW), 723–761 (DSGT…QLPG), 774–1162 (PTQS…TTPH), and 1185–1311 (KLTP…LQIG). Basic and acidic residues predominate over residues 70–79 (REKIERQQGI). 2 stretches are compositionally biased toward low complexity: residues 145-179 (SLGH…QQQQ) and 210-242 (PSSS…SSGG). Threonine 416 carries the post-translational modification Phosphothreonine. The span at 424 to 437 (LKTEKNHSLEKQDS) shows a compositional bias: basic and acidic residues. Over residues 439 to 450 (LENDLELSESED) the composition is skewed to acidic residues. Phosphoserine occurs at positions 446 and 448. Positions 459 to 479 (SAGNSSNSSESDSSESGSESS) are enriched in low complexity. Residues 487 to 496 (HPNHQQHHHQ) show a composition bias toward basic residues. Composition is skewed to low complexity over residues 497 to 522 (LQQQ…PQPL) and 561 to 587 (PAGV…GSSS). Residues 588–599 (NKTPSPTESNKW) are compositionally biased toward polar residues. The span at 723–755 (DSGTSASGSSSSSSSSSDSAVGGEVVPMPGPGE) shows a compositional bias: low complexity. A compositionally biased stretch (polar residues) spans 774–786 (PTQSQKAPPSNSV). The span at 800–810 (QRQKKPRKKKA) shows a compositional bias: basic residues. 2 positions are modified to phosphoserine: serine 819 and serine 820. The a.T hook DNA-binding region spans 849–861 (KKGRGRPRKQQQS). Low complexity predominate over residues 858-896 (QQQSGGSGNLSSASAGSSSQTKGPTLTAAKKPLAKTPLA). Phosphoserine occurs at positions 869 and 871. The segment covering 907–917 (SQSSSNGNTPT) has biased composition (polar residues). Composition is skewed to low complexity over residues 947 to 963 (SSSA…SSSS) and 988 to 1002 (ALLG…SSGS). The segment covering 1009-1020 (SRSQVGSGQALA) has biased composition (polar residues). Residues 1032–1058 (SQHSQHLSSSECSSSSGGCTAVCSSSS) show a composition bias toward low complexity. Over residues 1063–1080 (EGRREKERERKPKSDKNK) the composition is skewed to basic and acidic residues. The segment covering 1120 to 1130 (QPPPPHAPPAA) has biased composition (pro residues). The segment covering 1188–1203 (PAQQNGHLTPKDQATN) has biased composition (polar residues). Composition is skewed to basic and acidic residues over residues 1224–1241 (EHPV…EAKF) and 1250–1280 (FQLK…EQPP). Residue serine 1360 is modified to Phosphoserine. Residue threonine 1362 is modified to Phosphothreonine. Positions 1562-1581 (NTPSSISPSNSVGSQGSGSN) are enriched in low complexity. The interval 1562–1586 (NTPSSISPSNSVGSQGSGSNTPPGR) is disordered.

Belongs to the AF4 family.

It localises to the nucleus. In terms of biological role, has a role in transcriptional regulation. Acts in parallel with the Ras/MAPK and the PI3K/PKB pathways in the control of cell identity and cellular growth. Essential for regulation of the cytoskeleton and cell growth but not for cell proliferation or growth rate. Required specifically for the microtubule-based basal transport of lipid droplets. Plays a partially redundant function downstream of Raf in cell fate specification in the developing eye. Pair-rule protein that regulates embryonic cellularization, gastrulation and segmentation. The protein is AF4/FMR2 family member lilli of Drosophila yakuba (Fruit fly).